Here is a 688-residue protein sequence, read N- to C-terminus: Polyribonucleotide nucleotidyltransferase (688 aa).

Mg(2+) is bound by residues aspartate 484 and aspartate 490. The 60-residue stretch at 550 to 609 (PTTEIFNVAPDKIIEIIGQGGRVIREIVEKFEVKIDLNKPSGEVKIMGNKERVLKTKEFI) folds into the KH domain. An S1 motif domain is found at 626-688 (DEVLEAQVKR…NKGKIALDLA (63 aa)).

It belongs to the polyribonucleotide nucleotidyltransferase family. Mg(2+) serves as cofactor.

Its subcellular location is the cytoplasm. It carries out the reaction RNA(n+1) + phosphate = RNA(n) + a ribonucleoside 5'-diphosphate. Involved in mRNA degradation. Catalyzes the phosphorolysis of single-stranded polyribonucleotides processively in the 3'- to 5'-direction. The sequence is that of Polyribonucleotide nucleotidyltransferase from Helicobacter acinonychis (strain Sheeba).